Here is a 95-residue protein sequence, read N- to C-terminus: Aspartyl/glutamyl-tRNA(Asn/Gln) amidotransferase subunit C (95 aa).

It belongs to the GatC family. In terms of assembly, heterotrimer of A, B and C subunits.

The catalysed reaction is L-glutamyl-tRNA(Gln) + L-glutamine + ATP + H2O = L-glutaminyl-tRNA(Gln) + L-glutamate + ADP + phosphate + H(+). It carries out the reaction L-aspartyl-tRNA(Asn) + L-glutamine + ATP + H2O = L-asparaginyl-tRNA(Asn) + L-glutamate + ADP + phosphate + 2 H(+). Its function is as follows. Allows the formation of correctly charged Asn-tRNA(Asn) or Gln-tRNA(Gln) through the transamidation of misacylated Asp-tRNA(Asn) or Glu-tRNA(Gln) in organisms which lack either or both of asparaginyl-tRNA or glutaminyl-tRNA synthetases. The reaction takes place in the presence of glutamine and ATP through an activated phospho-Asp-tRNA(Asn) or phospho-Glu-tRNA(Gln). The sequence is that of Aspartyl/glutamyl-tRNA(Asn/Gln) amidotransferase subunit C from Caldanaerobacter subterraneus subsp. tengcongensis (strain DSM 15242 / JCM 11007 / NBRC 100824 / MB4) (Thermoanaerobacter tengcongensis).